Here is a 59-residue protein sequence, read N- to C-terminus: Large ribosomal subunit protein bL32C (59 aa).

It belongs to the bacterial ribosomal protein bL32 family.

The sequence is that of Large ribosomal subunit protein bL32C (rpmF3) from Enterococcus faecalis (strain ATCC 700802 / V583).